A 536-amino-acid polypeptide reads, in one-letter code: T-complex protein 1 subunit delta (536 aa).

The disordered stretch occupies residues 1–21 (MAAVAAPMASKPRGSKAESFV).

The protein belongs to the TCP-1 chaperonin family. As to quaternary structure, heterooligomeric complex of about 850 to 900 kDa that forms two stacked rings, 12 to 16 nm in diameter.

It localises to the cytoplasm. In terms of biological role, molecular chaperone; assists the folding of proteins upon ATP hydrolysis. Known to play a role, in vitro, in the folding of actin and tubulin. The polypeptide is T-complex protein 1 subunit delta (Arabidopsis thaliana (Mouse-ear cress)).